The following is a 200-amino-acid chain: HTH-type transcriptional regulator BetI (200 aa).

Residues 8–68 (DIRKPQLVQA…ETMREILRQL (61 aa)) enclose the HTH tetR-type domain. The H-T-H motif DNA-binding region spans 31-50 (SIALISKEAGVSTGIINHYF).

Its pathway is amine and polyamine biosynthesis; betaine biosynthesis via choline pathway [regulation]. Functionally, repressor involved in the biosynthesis of the osmoprotectant glycine betaine. It represses transcription of the choline transporter BetT and the genes of BetAB involved in the synthesis of glycine betaine. The protein is HTH-type transcriptional regulator BetI of Vibrio atlanticus (strain LGP32) (Vibrio splendidus (strain Mel32)).